The primary structure comprises 327 residues: Replication factor C small subunit (327 aa).

ATP is bound at residue 47-54 (GPPGTGKT).

This sequence belongs to the activator 1 small subunits family. RfcS subfamily. As to quaternary structure, heteromultimer composed of small subunits (RfcS) and large subunits (RfcL).

Part of the RFC clamp loader complex which loads the PCNA sliding clamp onto DNA. The sequence is that of Replication factor C small subunit from Sulfurisphaera tokodaii (strain DSM 16993 / JCM 10545 / NBRC 100140 / 7) (Sulfolobus tokodaii).